We begin with the raw amino-acid sequence, 369 residues long: MIAILLAVAFGITFTLFTTPFFIRLFRKIGWGQFIRLDGPRQHAIKRGTPTMGGLVIVVASIISYFLANFFLGLSVEPSGLLVIFMFVGMSLVGFLDDILKVRKQHSGGLGPFYKVVLQSFIAVPFALLTFLVKDARGIPHSSMSISFARDTGINFSALFSLGIIGVFSAWVLYLLWINLIAVSSVNAVNITDGLDGLAAGAMIFTMLAYVVIGFWQSGQNCARKSLPLENISKCYSVNGPLDMSILAAAILGSLLGFLWWNTNPSKIMMGDTGALALGGAAAALSILTHTQLLFLVLGGLFVIEAGSVILQIAFYKKYRRRIFLMSPLHHHFELKGWAEITVVVRFWIIAGLFTALGIGLFYADWLYS.

The next 10 membrane-spanning stretches (helical) occupy residues 2–22 (IAILLAVAFGITFTLFTTPFF), 54–74 (GLVIVVASIISYFLANFFLGL), 80–100 (GLLVIFMFVGMSLVGFLDDIL), 113–133 (FYKVVLQSFIAVPFALLTFLV), 158–178 (ALFSLGIIGVFSAWVLYLLWI), 195–215 (LDGLAAGAMIFTMLAYVVIGF), 241–261 (PLDMSILAAAILGSLLGFLWW), 268–288 (IMMGDTGALALGGAAAALSIL), 293–313 (LLFLVLGGLFVIEAGSVILQI), and 347–367 (FWIIAGLFTALGIGLFYADWL).

This sequence belongs to the glycosyltransferase 4 family. MraY subfamily. It depends on Mg(2+) as a cofactor.

It is found in the cell membrane. The enzyme catalyses UDP-N-acetyl-alpha-D-muramoyl-L-alanyl-gamma-D-glutamyl-meso-2,6-diaminopimeloyl-D-alanyl-D-alanine + di-trans,octa-cis-undecaprenyl phosphate = di-trans,octa-cis-undecaprenyl diphospho-N-acetyl-alpha-D-muramoyl-L-alanyl-D-glutamyl-meso-2,6-diaminopimeloyl-D-alanyl-D-alanine + UMP. It functions in the pathway cell wall biogenesis; peptidoglycan biosynthesis. In terms of biological role, catalyzes the initial step of the lipid cycle reactions in the biosynthesis of the cell wall peptidoglycan: transfers peptidoglycan precursor phospho-MurNAc-pentapeptide from UDP-MurNAc-pentapeptide onto the lipid carrier undecaprenyl phosphate, yielding undecaprenyl-pyrophosphoryl-MurNAc-pentapeptide, known as lipid I. The sequence is that of Phospho-N-acetylmuramoyl-pentapeptide-transferase from Tropheryma whipplei (strain TW08/27) (Whipple's bacillus).